Here is a 255-residue protein sequence, read N- to C-terminus: CD320 antigen (255 aa).

Residues 1-29 (MNGWVARGLARRAAALGLGLRVLLCFGLC) form the signal peptide. Residues 30–203 (LEIAPTPIQT…SVQSGNRNVY (174 aa)) are Extracellular-facing. 2 consecutive LDL-receptor class A domains span residues 52–89 (SCPP…EECG) and 120–157 (SCPE…LGCG). 6 disulfides stabilise this stretch: Cys-53/Cys-66, Cys-60/Cys-79, Cys-73/Cys-88, Cys-121/Cys-134, Cys-128/Cys-147, and Cys-141/Cys-156. Ca(2+)-binding residues include Trp-71, Asp-74, Asp-76, Asp-78, Asp-84, and Glu-85. Ca(2+) contacts are provided by Trp-139, Asp-142, His-144, Asp-146, Asp-152, and Glu-153. Residues Asn-177 and Asn-183 are each glycosylated (N-linked (GlcNAc...) asparagine). A helical transmembrane segment spans residues 204–224 (GIIAAVAVLSISLAAGILFAL). At 225 to 255 (SRLCAQGCLAPLGLLVSMKGSLQPEKKTSVL) the chain is on the cytoplasmic side.

Interacts (via LDL-receptor class A domains) with TCN2.

Its subcellular location is the cell membrane. In terms of biological role, receptor for transcobalamin saturated with cobalamin (TCbl). Plays an important role in cobalamin uptake. Plasma membrane protein that is expressed on follicular dendritic cells (FDC) and mediates interaction with germinal center B cells. Functions as a costimulator to promote B cell responses to antigenic stimuli; promotes B cell differentiation and proliferation. Germinal center-B (GC-B) cells differentiate into memory B-cells and plasma cells (PC) through interaction with T-cells and follicular dendritic cells (FDC). CD320 augments the proliferation of PC precursors generated by IL-10. This Bos taurus (Bovine) protein is CD320 antigen (CD320).